Reading from the N-terminus, the 186-residue chain is Ribosome-recycling factor (186 aa).

This sequence belongs to the RRF family.

It is found in the cytoplasm. Responsible for the release of ribosomes from messenger RNA at the termination of protein biosynthesis. May increase the efficiency of translation by recycling ribosomes from one round of translation to another. The protein is Ribosome-recycling factor of Leptothrix cholodnii (strain ATCC 51168 / LMG 8142 / SP-6) (Leptothrix discophora (strain SP-6)).